The following is a 102-amino-acid chain: Auxin-responsive protein SAUR68 (102 aa).

The protein belongs to the ARG7 family.

The protein localises to the cell membrane. May promote auxin-stimulated organ elongation, such as hypocotyls, stamen filaments and petals. The polypeptide is Auxin-responsive protein SAUR68 (Arabidopsis thaliana (Mouse-ear cress)).